A 63-amino-acid polypeptide reads, in one-letter code: Large ribosomal subunit protein eL37 (63 aa).

Zn(2+)-binding residues include C20, C23, C35, and C38. Residues 20–38 (CRRCGHHSFNVRKGYCAHC) form a C4-type zinc finger.

Belongs to the eukaryotic ribosomal protein eL37 family. The cofactor is Zn(2+).

Binds to the 23S rRNA. This chain is Large ribosomal subunit protein eL37, found in Thermofilum pendens (strain DSM 2475 / Hrk 5).